The primary structure comprises 619 residues: Calnexin (619 aa).

The N-terminal stretch at Met-1–Ser-21 is a signal peptide. Residue Asp-109 coordinates Ca(2+). An intrachain disulfide couples Cys-152 to Cys-186. An alpha-D-glucoside is bound by residues Tyr-156, Lys-158, Tyr-177, and Asp-184. Residue Asn-203 is glycosylated (N-linked (GlcNAc...) asparagine). A p domain (Extended arm) region spans residues Ile-268–Glu-401. 5 repeat units span residues Asp-270–Arg-282, Asp-287–Asn-299, Asp-306–Glu-318, Asp-325–Asp-337, and Gly-340–Pro-350. 2 4 X approximate repeats regions span residues Asp-270–Asp-337 and Gly-340–Pro-397. The cysteines at positions 352 and 358 are disulfide-linked. 3 consecutive repeat copies span residues Gly-359–Pro-369, Gly-373–Pro-383, and Gly-387–Pro-397. Glu-417 is a binding site for an alpha-D-glucoside. Asp-428 lines the Ca(2+) pocket. The helical transmembrane segment at Leu-481–Phe-501 threads the bilayer. A disordered region spans residues Gly-538–Asp-619. Polar residues predominate over residues Pro-547 to Glu-557. A compositionally biased stretch (low complexity) spans Glu-566–Ala-577. Residue Asn-571 is glycosylated (N-linked (GlcNAc...) asparagine). Over residues His-585–Lys-601 the composition is skewed to basic and acidic residues. Over residues Ala-610–Asp-619 the composition is skewed to basic residues.

The protein belongs to the calreticulin family. Post-translationally, glycosylation is important for its biological activity. Expressed ubiquitously in every blastomere of the embryo up to the gastrulation stage. Expression becomes gradually restricted to the head and tail regions at the comma stage during embryogenesis. During postembryonic development, expressed prominently in the H-shaped excretory cell, in the neurons of head (including ASK and ADL) and tail (including PHA and PHB), in the dorsal and ventral nerve cords, and in the spermatheca. Expressed in the spicules of the male tail (at protein level).

The protein localises to the endoplasmic reticulum membrane. It localises to the cytoplasm. It is found in the perinuclear region. The protein resides in the cytoplasmic vesicle. Functionally, calcium-binding protein that interacts with newly synthesized monoglucosylated glycoproteins in the endoplasmic reticulum. It may act in assisting protein assembly and/or in the retention within the ER of unassembled protein subunits. It seems to play a major role in the quality control apparatus of the ER by the retention of incorrectly folded proteins. Required for embryogenesis and larval development under heat and ER stress conditions. May be important for germ cell development. Involved in neuronal necrotic cell death. This Caenorhabditis elegans protein is Calnexin (cnx-1).